We begin with the raw amino-acid sequence, 332 residues long: Ribosomal RNA small subunit methyltransferase H (332 aa).

Residues 36 to 38 (GGH), D61, F88, D114, and Q121 contribute to the S-adenosyl-L-methionine site.

The protein belongs to the methyltransferase superfamily. RsmH family.

It localises to the cytoplasm. The catalysed reaction is cytidine(1402) in 16S rRNA + S-adenosyl-L-methionine = N(4)-methylcytidine(1402) in 16S rRNA + S-adenosyl-L-homocysteine + H(+). Functionally, specifically methylates the N4 position of cytidine in position 1402 (C1402) of 16S rRNA. This Pelodictyon phaeoclathratiforme (strain DSM 5477 / BU-1) protein is Ribosomal RNA small subunit methyltransferase H.